We begin with the raw amino-acid sequence, 338 residues long: Ketol-acid reductoisomerase (NADP(+)) (338 aa).

One can recognise a KARI N-terminal Rossmann domain in the interval 1–181 (MKVFYDKDAD…GGGKAGIIET (181 aa)). NADP(+) is bound by residues 24–27 (YGSQ), Arg47, and Ser52. Residue His107 is part of the active site. Residue Gly133 coordinates NADP(+). The KARI C-terminal knotted domain maps to 182–327 (NFREETETDL…EKLRAMMPWI (146 aa)). Residues Asp190, Glu194, Glu226, and Glu230 each coordinate Mg(2+). Residue Ser251 coordinates substrate.

This sequence belongs to the ketol-acid reductoisomerase family. Requires Mg(2+) as cofactor.

The enzyme catalyses (2R)-2,3-dihydroxy-3-methylbutanoate + NADP(+) = (2S)-2-acetolactate + NADPH + H(+). The catalysed reaction is (2R,3R)-2,3-dihydroxy-3-methylpentanoate + NADP(+) = (S)-2-ethyl-2-hydroxy-3-oxobutanoate + NADPH + H(+). It participates in amino-acid biosynthesis; L-isoleucine biosynthesis; L-isoleucine from 2-oxobutanoate: step 2/4. The protein operates within amino-acid biosynthesis; L-valine biosynthesis; L-valine from pyruvate: step 2/4. Functionally, involved in the biosynthesis of branched-chain amino acids (BCAA). Catalyzes an alkyl-migration followed by a ketol-acid reduction of (S)-2-acetolactate (S2AL) to yield (R)-2,3-dihydroxy-isovalerate. In the isomerase reaction, S2AL is rearranged via a Mg-dependent methyl migration to produce 3-hydroxy-3-methyl-2-ketobutyrate (HMKB). In the reductase reaction, this 2-ketoacid undergoes a metal-dependent reduction by NADPH to yield (R)-2,3-dihydroxy-isovalerate. The chain is Ketol-acid reductoisomerase (NADP(+)) from Leptothrix cholodnii (strain ATCC 51168 / LMG 8142 / SP-6) (Leptothrix discophora (strain SP-6)).